Reading from the N-terminus, the 220-residue chain is Fructose-6-phosphate aldolase (220 aa).

The active-site Schiff-base intermediate with substrate is the K85.

It belongs to the transaldolase family. Type 3A subfamily. Homodecamer.

The protein localises to the cytoplasm. The enzyme catalyses beta-D-fructose 6-phosphate = dihydroxyacetone + D-glyceraldehyde 3-phosphate. Functionally, catalyzes the reversible formation of fructose 6-phosphate from dihydroxyacetone and D-glyceraldehyde 3-phosphate via an aldolization reaction. This chain is Fructose-6-phosphate aldolase, found in Salmonella heidelberg (strain SL476).